We begin with the raw amino-acid sequence, 168 residues long: Small ribosomal subunit protein uS5 (168 aa).

Positions Tyr11 to Ile74 constitute an S5 DRBM domain.

Belongs to the universal ribosomal protein uS5 family. Part of the 30S ribosomal subunit. Contacts proteins S4 and S8.

In terms of biological role, with S4 and S12 plays an important role in translational accuracy. Its function is as follows. Located at the back of the 30S subunit body where it stabilizes the conformation of the head with respect to the body. In Leptospira interrogans serogroup Icterohaemorrhagiae serovar copenhageni (strain Fiocruz L1-130), this protein is Small ribosomal subunit protein uS5.